Here is a 654-residue protein sequence, read N- to C-terminus: Fructose-1,6-bisphosphatase class 3 (654 aa).

Residues 288 to 307 (NPAFKPKKRPDKHERLTQRE) form a disordered region. Over residues 298–307 (DKHERLTQRE) the composition is skewed to basic and acidic residues.

It belongs to the FBPase class 3 family. It depends on Mn(2+) as a cofactor.

It catalyses the reaction beta-D-fructose 1,6-bisphosphate + H2O = beta-D-fructose 6-phosphate + phosphate. Its pathway is carbohydrate biosynthesis; gluconeogenesis. The protein is Fructose-1,6-bisphosphatase class 3 of Staphylococcus aureus (strain USA300).